We begin with the raw amino-acid sequence, 1225 residues long: Clustered mitochondria protein homolog (1225 aa).

Positions 1–22 (MAQTNGEMEHSKESPEQITNGN) are disordered. A Clu domain is found at 281–532 (QESNNQKDLL…RVTPLDVAWN (252 aa)). Disordered regions lie at residues 577–605 (EEAA…EALD) and 846–878 (ANGV…SAAA). TPR repeat units lie at residues 949–982 (AKLY…TERT), 991–1024 (ILSY…WKII), and 1033–1066 (ITTM…CESL). The segment covering 1153–1184 (RTTLGTQIQPQVGQSTADVSAPSQASNSSIDS) has biased composition (polar residues). The interval 1153-1225 (RTTLGTQIQP…KLRGSKKSSA (73 aa)) is disordered.

It belongs to the CLU family. May associate with the eukaryotic translation initiation factor 3 (eIF-3) complex.

The protein resides in the cytoplasm. MRNA-binding protein involved in proper cytoplasmic distribution of mitochondria. This chain is Clustered mitochondria protein homolog, found in Emericella nidulans (strain FGSC A4 / ATCC 38163 / CBS 112.46 / NRRL 194 / M139) (Aspergillus nidulans).